The primary structure comprises 83 residues: Large ribosomal subunit protein bL27 (83 aa).

The interval 1-20 (MAHKKGASSSRNGRDSNPQY) is disordered. The segment covering 7–19 (ASSSRNGRDSNPQ) has biased composition (polar residues).

The protein belongs to the bacterial ribosomal protein bL27 family.

The sequence is that of Large ribosomal subunit protein bL27 from Bifidobacterium animalis subsp. lactis (strain AD011).